Reading from the N-terminus, the 569-residue chain is Urease subunit alpha (569 aa).

3 residues coordinate Ni(2+): His136, His138, and Lys219. Lys219 bears the N6-carboxylysine mark. Position 221 (His221) interacts with substrate. Residues His248 and His274 each coordinate Ni(2+). Residue His322 is the Proton donor of the active site. Position 362 (Asp362) interacts with Ni(2+).

The protein belongs to the metallo-dependent hydrolases superfamily. Urease alpha subunit family. In terms of assembly, heterotrimer of UreA (gamma), UreB (beta) and UreC (alpha) subunits. Three heterotrimers associate to form the active enzyme. It depends on Ni cation as a cofactor. Carboxylation allows a single lysine to coordinate two nickel ions.

Its subcellular location is the cytoplasm. The catalysed reaction is urea + 2 H2O + H(+) = hydrogencarbonate + 2 NH4(+). The protein operates within nitrogen metabolism; urea degradation; CO(2) and NH(3) from urea (urease route): step 1/1. This Microcystis aeruginosa (strain NIES-843 / IAM M-2473) protein is Urease subunit alpha.